A 530-amino-acid chain; its full sequence is Na(+)/H(+) antiporter NhaB (530 aa).

The next 10 helical transmembrane spans lie at 13-33 (FLGQ…LINP), 67-87 (PGGL…ETVL), 90-110 (VVGN…IYFL), 138-158 (AAAL…VIAV), 205-225 (LLMH…VGEP), 245-265 (MAPI…FLEF), 302-333 (LVIQ…VIIL), 350-370 (FEEA…VAVI), 449-469 (VATP…LAPL), and 477-497 (MVIM…VMTA).

The protein belongs to the NhaB Na(+)/H(+) (TC 2.A.34) antiporter family.

It localises to the cell inner membrane. The catalysed reaction is 2 Na(+)(in) + 3 H(+)(out) = 2 Na(+)(out) + 3 H(+)(in). Functionally, na(+)/H(+) antiporter that extrudes sodium in exchange for external protons. This chain is Na(+)/H(+) antiporter NhaB, found in Alcanivorax borkumensis (strain ATCC 700651 / DSM 11573 / NCIMB 13689 / SK2).